A 534-amino-acid chain; its full sequence is EH domain-containing protein 1 (534 aa).

Met-1 bears the N-acetylmethionine mark. A Dynamin-type G domain is found at Phe-55–Pro-286. The interval Gly-65–Thr-72 is G1 motif. Position 65–72 (Gly-65–Thr-72) interacts with ATP. Residues Glu-91–Pro-92 are G2 motif. The interval Asp-153–Gly-156 is G3 motif. A coiled-coil region spans residues Asp-198 to Gln-227. A G4 motif region spans residues Asn-219–Asp-222. Lys-220 serves as a coordination point for ATP. A region of interest (G5 motif) is located at residue Ile-243. An ATP-binding site is contributed by Trp-258. An EH domain is found at Asp-444–Arg-532. Position 456 is a phosphoserine (Ser-456). The 36-residue stretch at Leu-476 to Lys-511 folds into the EF-hand domain. Residues Asp-489, Asp-491, Asp-493, and Glu-500 each coordinate Ca(2+).

This sequence belongs to the TRAFAC class dynamin-like GTPase superfamily. Dynamin/Fzo/YdjA family. EHD subfamily. As to quaternary structure, homooligomer, and heterooligomer with EHD2, EHD3 and EHD4, ATP-binding is required for heterooligomerization. Interacts (via EH domain) with MICALL1 (via NPF1 motif); the interaction is direct and recruits EHD1 to membranes. Interacts with RAB35; the interaction is indirect through MICALL1 and recruits EHD1 to membranes. Interacts (via EH domain) with PACSIN2 (via NPF motifs); regulates localization to tubular recycling endosome membranes. Interacts with PACSIN1. Interacts with RAB8A. Interacts with FER1L5 (via second C2 domain). Interacts with MYOF. Interacts with ZFYVE20. Interacts (via EH domain) with RAB11FIP2.

It is found in the recycling endosome membrane. The protein localises to the early endosome membrane. The protein resides in the cell membrane. It localises to the cell projection. Its subcellular location is the cilium membrane. ATP- and membrane-binding protein that controls membrane reorganization/tubulation upon ATP hydrolysis. Acts in early endocytic membrane fusion and membrane trafficking of recycling endosomes. Recruited to endosomal membranes upon nerve growth factor stimulation, indirectly regulates neurite outgrowth. Plays a role in myoblast fusion. Involved in the unidirectional retrograde dendritic transport of endocytosed BACE1 and in efficient sorting of BACE1 to axons implicating a function in neuronal APP processing. Plays a role in the formation of the ciliary vesicle (CV), an early step in cilium biogenesis. Proposed to be required for the fusion of distal appendage vesicles (DAVs) to form the CV by recruiting SNARE complex component SNAP29. Is required for recruitment of transition zone proteins CEP290, RPGRIP1L, TMEM67 and B9D2, and of IFT20 following DAV reorganization before Rab8-dependent ciliary membrane extension. Required for the loss of CCP110 form the mother centriole essential for the maturation of the basal body during ciliogenesis. In Bos taurus (Bovine), this protein is EH domain-containing protein 1.